The sequence spans 279 residues: NADPH-dependent 7-cyano-7-deazaguanine reductase (279 aa).

86-88 contributes to the substrate binding site; it reads IES. NADPH is bound at residue 88–89; the sequence is SK. Catalysis depends on C186, which acts as the Thioimide intermediate. D193 acts as the Proton donor in catalysis. Substrate is bound at residue 225-226; the sequence is HE. An NADPH-binding site is contributed by 254–255; the sequence is RG.

The protein belongs to the GTP cyclohydrolase I family. QueF type 2 subfamily. As to quaternary structure, homodimer.

The protein resides in the cytoplasm. The enzyme catalyses 7-aminomethyl-7-carbaguanine + 2 NADP(+) = 7-cyano-7-deazaguanine + 2 NADPH + 3 H(+). It participates in tRNA modification; tRNA-queuosine biosynthesis. Functionally, catalyzes the NADPH-dependent reduction of 7-cyano-7-deazaguanine (preQ0) to 7-aminomethyl-7-deazaguanine (preQ1). The chain is NADPH-dependent 7-cyano-7-deazaguanine reductase from Chromobacterium violaceum (strain ATCC 12472 / DSM 30191 / JCM 1249 / CCUG 213 / NBRC 12614 / NCIMB 9131 / NCTC 9757 / MK).